A 135-amino-acid polypeptide reads, in one-letter code: RxLR effector protein Avr10 (135 aa).

The N-terminal stretch at 1 to 19 (MRLSFIIFAISLLAGGSGA) is a signal peptide. Over residues 34-43 (GTNQGASTGK) the composition is skewed to polar residues. The segment at 34–64 (GTNQGASTGKRSLRYDNNAERAGEEDDEERA) is disordered. The RxLR-dEER motif lies at 44–63 (RSLRYDNNAERAGEEDDEER). Residues 46-55 (LRYDNNAERA) show a composition bias toward basic and acidic residues.

It belongs to the RxLR effector family.

It localises to the secreted. The protein localises to the host nucleus. It is found in the host cytoplasm. Its function is as follows. Secreted effector that acts as an elicitor of hypersensitive response (HR) specifically on plants carrying defense protein R10. Enhances P.infestans colonization of Nicotiana benthamiana leaves. In Phytophthora infestans (strain T30-4) (Potato late blight agent), this protein is RxLR effector protein Avr10.